Here is a 369-residue protein sequence, read N- to C-terminus: Flagellar P-ring protein (369 aa).

A signal peptide spans 1–23 (MRSLLRWMGVLLLCGLCAAPAQA).

The protein belongs to the FlgI family. In terms of assembly, the basal body constitutes a major portion of the flagellar organelle and consists of four rings (L,P,S, and M) mounted on a central rod.

Its subcellular location is the periplasm. The protein localises to the bacterial flagellum basal body. Functionally, assembles around the rod to form the L-ring and probably protects the motor/basal body from shearing forces during rotation. This is Flagellar P-ring protein from Chromohalobacter salexigens (strain ATCC BAA-138 / DSM 3043 / CIP 106854 / NCIMB 13768 / 1H11).